A 153-amino-acid chain; its full sequence is Peptide deformylase (153 aa).

Cys87 and His129 together coordinate Fe cation. Residue Glu130 is part of the active site. His133 serves as a coordination point for Fe cation.

This sequence belongs to the polypeptide deformylase family. Fe(2+) is required as a cofactor.

The catalysed reaction is N-terminal N-formyl-L-methionyl-[peptide] + H2O = N-terminal L-methionyl-[peptide] + formate. Its function is as follows. Removes the formyl group from the N-terminal Met of newly synthesized proteins. Requires at least a dipeptide for an efficient rate of reaction. N-terminal L-methionine is a prerequisite for activity but the enzyme has broad specificity at other positions. This chain is Peptide deformylase, found in Dictyoglomus thermophilum (strain ATCC 35947 / DSM 3960 / H-6-12).